A 483-amino-acid polypeptide reads, in one-letter code: MKGLIARFIAGFALLLWAWDMVFPWQQLMQAEENRYNQIQQRKILRVGMVNHPLSYFIGAEGTAGIEYELAKSFANYLDVRLDIKTFDNSEQLFSALKDNKVDIAAAGLLYQPELSKQFQIGSAYYSASWQVVYKKGSNRPYKLSELEGDLIIPAGSAVLPILQRLKEDNPKLSWQTTNQFTQEELLLQVAEGKIPYTVGISVDISAAQHIRPNIAVGFDLTDEAPVLWYLPNSSYSELQAAVLDFMNHANETGLISRIEEKYFNHLAHFDYVDIQSYLKAIKLVLPKYQSLFEKYRGDLEWQMLAAIAYQESHWDPNATSPTGVRGMMMLTRDTAERMKITDRTSAEQSIRAGSEYLHMLMRQIPETVPKEDRIWYGLAAYNMGFGHLLDVRRLTRQLGGNPDNWLDVKKNLPLLAEKRHYSGLKYGYARGFEAFQYVENIRRYYSSIINHQRVEEQQIQNNEEQPSVPQEISKESDSTLKE.

The first 18 residues, 1 to 18, serve as a signal peptide directing secretion; the sequence is MKGLIARFIAGFALLLWA. Residues 19 to 267 are non-LT domain; it reads WDMVFPWQQL…RIEEKYFNHL (249 aa). The segment at 269–483 is LT domain; sequence HFDYVDIQSY…SKESDSTLKE (215 aa). Glu-312 is an active-site residue. Residues 458 to 483 are disordered; sequence QQIQNNEEQPSVPQEISKESDSTLKE. Residues 473 to 483 show a composition bias toward basic and acidic residues; sequence ISKESDSTLKE.

It in the N-terminal section; belongs to the bacterial solute-binding protein 3 family. The protein in the C-terminal section; belongs to the transglycosylase Slt family.

The protein localises to the cell outer membrane. The enzyme catalyses Exolytic cleavage of the (1-&gt;4)-beta-glycosidic linkage between N-acetylmuramic acid (MurNAc) and N-acetylglucosamine (GlcNAc) residues in peptidoglycan, from either the reducing or the non-reducing ends of the peptidoglycan chains, with concomitant formation of a 1,6-anhydrobond in the MurNAc residue.. Functionally, murein-degrading enzyme that degrades murein glycan strands and insoluble, high-molecular weight murein sacculi, with the concomitant formation of a 1,6-anhydromuramoyl product. Lytic transglycosylases (LTs) play an integral role in the metabolism of the peptidoglycan (PG) sacculus. Their lytic action creates space within the PG sacculus to allow for its expansion as well as for the insertion of various structures such as secretion systems and flagella. The protein is Membrane-bound lytic murein transglycosylase F of Actinobacillus pleuropneumoniae serotype 3 (strain JL03).